The sequence spans 695 residues: NADPH--cytochrome P450 reductase (695 aa).

Over 1-8 (MAQLDTLD) the chain is Lumenal. A helical membrane pass occupies residues 9 to 31 (LVVLVALLVGSVAYFTKGTYWAV). Topologically, residues 32-695 (AKDPYASSGP…SGSYQEDVWS (664 aa)) are cytoplasmic. Residues 66-221 (CVIFYGSQTG…DFLAWKEPMW (156 aa)) enclose the Flavodoxin-like domain. FMN contacts are provided by residues 72-77 (SQTGTA), 123-126 (ATYG), 169-178 (LGNNTYEHYN), and Asp-204. The FAD-binding FR-type domain maps to 277–538 (HNPFIAPIVE…HVRHSNFKLP (262 aa)). Arg-296 provides a ligand contact to NADP(+). FAD contacts are provided by residues 451-454 (RYYS), 469-471 (TAV), and 486-489 (GVTT). Residues Thr-552, 614–615 (SR), 620–624 (KVYVQ), and Glu-656 contribute to the NADP(+) site. Trp-694 serves as a coordination point for FAD.

It belongs to the NADPH--cytochrome P450 reductase family. In the N-terminal section; belongs to the flavodoxin family. The protein in the C-terminal section; belongs to the flavoprotein pyridine nucleotide cytochrome reductase family. It depends on FAD as a cofactor. FMN is required as a cofactor.

It localises to the endoplasmic reticulum membrane. The protein resides in the mitochondrion outer membrane. It is found in the cell membrane. The catalysed reaction is 2 oxidized [cytochrome P450] + NADPH = 2 reduced [cytochrome P450] + NADP(+) + H(+). Functionally, this enzyme is required for electron transfer from NADP to cytochrome P450 in microsomes. It can also provide electron transfer to heme oxygenase and cytochrome B5. Involved in ergosterol biosynthesis. This is NADPH--cytochrome P450 reductase from Aspergillus oryzae (strain ATCC 42149 / RIB 40) (Yellow koji mold).